We begin with the raw amino-acid sequence, 212 residues long: Thiamine-phosphate synthase (212 aa).

Residues 40 to 44 (QFREK) and Asn-75 each bind 4-amino-2-methyl-5-(diphosphooxymethyl)pyrimidine. 2 residues coordinate Mg(2+): Asp-76 and Asp-95. Ser-113 serves as a coordination point for 4-amino-2-methyl-5-(diphosphooxymethyl)pyrimidine. 139-141 (TPS) lines the 2-[(2R,5Z)-2-carboxy-4-methylthiazol-5(2H)-ylidene]ethyl phosphate pocket. Lys-142 lines the 4-amino-2-methyl-5-(diphosphooxymethyl)pyrimidine pocket. 2-[(2R,5Z)-2-carboxy-4-methylthiazol-5(2H)-ylidene]ethyl phosphate contacts are provided by residues Gly-171 and 191–192 (IS).

The protein belongs to the thiamine-phosphate synthase family. Requires Mg(2+) as cofactor.

It catalyses the reaction 2-[(2R,5Z)-2-carboxy-4-methylthiazol-5(2H)-ylidene]ethyl phosphate + 4-amino-2-methyl-5-(diphosphooxymethyl)pyrimidine + 2 H(+) = thiamine phosphate + CO2 + diphosphate. It carries out the reaction 2-(2-carboxy-4-methylthiazol-5-yl)ethyl phosphate + 4-amino-2-methyl-5-(diphosphooxymethyl)pyrimidine + 2 H(+) = thiamine phosphate + CO2 + diphosphate. The catalysed reaction is 4-methyl-5-(2-phosphooxyethyl)-thiazole + 4-amino-2-methyl-5-(diphosphooxymethyl)pyrimidine + H(+) = thiamine phosphate + diphosphate. It participates in cofactor biosynthesis; thiamine diphosphate biosynthesis; thiamine phosphate from 4-amino-2-methyl-5-diphosphomethylpyrimidine and 4-methyl-5-(2-phosphoethyl)-thiazole: step 1/1. Condenses 4-methyl-5-(beta-hydroxyethyl)thiazole monophosphate (THZ-P) and 2-methyl-4-amino-5-hydroxymethyl pyrimidine pyrophosphate (HMP-PP) to form thiamine monophosphate (TMP). This Staphylococcus carnosus (strain TM300) protein is Thiamine-phosphate synthase.